The chain runs to 105 residues: uncharacterized protein (105 aa).

The next 2 helical transmembrane spans lie at Tyr-10–Gly-30 and Tyr-48–Ser-68.

It localises to the membrane. This is an uncharacterized protein from Acanthamoeba polyphaga mimivirus (APMV).